The chain runs to 375 residues: Alcohol dehydrogenase 1 (375 aa).

An N-acetylserine modification is found at Ser-2. The Zn(2+) site is built by Cys-47, His-68, Cys-98, Cys-101, Cys-104, Cys-112, and Cys-175. NAD(+) contacts are provided by residues 200 to 205, Asp-224, and Lys-229; that span reads GLGGVG. N6-succinyllysine is present on Lys-234. Residue 293 to 295 coordinates NAD(+); it reads VGV. Lys-340 carries the N6-succinyllysine modification. Arg-370 contributes to the NAD(+) binding site.

This sequence belongs to the zinc-containing alcohol dehydrogenase family. Class-I subfamily. Requires Zn(2+) as cofactor.

Its subcellular location is the cytoplasm. The catalysed reaction is a primary alcohol + NAD(+) = an aldehyde + NADH + H(+). The enzyme catalyses a secondary alcohol + NAD(+) = a ketone + NADH + H(+). This chain is Alcohol dehydrogenase 1 (ADH1), found in Peromyscus maniculatus (North American deer mouse).